The chain runs to 151 residues: Transcriptional regulator MraZ (151 aa).

SpoVT-AbrB domains are found at residues 5-52 (ANAI…PLSE) and 81-124 (AVDL…DEDA).

Belongs to the MraZ family. Forms oligomers.

It localises to the cytoplasm. The protein localises to the nucleoid. In Pseudomonas syringae pv. tomato (strain ATCC BAA-871 / DC3000), this protein is Transcriptional regulator MraZ.